We begin with the raw amino-acid sequence, 209 residues long: Thiamine-phosphate synthase (209 aa).

4-amino-2-methyl-5-(diphosphooxymethyl)pyrimidine-binding positions include 35-39 (QLRNK) and Asn67. Mg(2+)-binding residues include Asp68 and Asp87. 4-amino-2-methyl-5-(diphosphooxymethyl)pyrimidine is bound at residue Ser106. 132 to 134 (TGS) contributes to the 2-[(2R,5Z)-2-carboxy-4-methylthiazol-5(2H)-ylidene]ethyl phosphate binding site. 4-amino-2-methyl-5-(diphosphooxymethyl)pyrimidine is bound at residue Lys135. Residues Gly163 and 183-184 (IS) contribute to the 2-[(2R,5Z)-2-carboxy-4-methylthiazol-5(2H)-ylidene]ethyl phosphate site.

The protein belongs to the thiamine-phosphate synthase family. Mg(2+) is required as a cofactor.

The catalysed reaction is 2-[(2R,5Z)-2-carboxy-4-methylthiazol-5(2H)-ylidene]ethyl phosphate + 4-amino-2-methyl-5-(diphosphooxymethyl)pyrimidine + 2 H(+) = thiamine phosphate + CO2 + diphosphate. It catalyses the reaction 2-(2-carboxy-4-methylthiazol-5-yl)ethyl phosphate + 4-amino-2-methyl-5-(diphosphooxymethyl)pyrimidine + 2 H(+) = thiamine phosphate + CO2 + diphosphate. The enzyme catalyses 4-methyl-5-(2-phosphooxyethyl)-thiazole + 4-amino-2-methyl-5-(diphosphooxymethyl)pyrimidine + H(+) = thiamine phosphate + diphosphate. The protein operates within cofactor biosynthesis; thiamine diphosphate biosynthesis; thiamine phosphate from 4-amino-2-methyl-5-diphosphomethylpyrimidine and 4-methyl-5-(2-phosphoethyl)-thiazole: step 1/1. Functionally, condenses 4-methyl-5-(beta-hydroxyethyl)thiazole monophosphate (THZ-P) and 2-methyl-4-amino-5-hydroxymethyl pyrimidine pyrophosphate (HMP-PP) to form thiamine monophosphate (TMP). This is Thiamine-phosphate synthase from Chlorobium phaeovibrioides (strain DSM 265 / 1930) (Prosthecochloris vibrioformis (strain DSM 265)).